The following is a 656-amino-acid chain: Methionine--tRNA ligase (656 aa).

Positions 13 to 23 match the 'HIGH' region motif; it reads YYPSGNLHIGH. Positions 308-312 match the 'KMSKS' region motif; sequence KMSKS. An ATP-binding site is contributed by K311. The tRNA-binding domain maps to 556 to 656; it reads DFDKVEIKAA…SAIPNGAVIK (101 aa).

The protein belongs to the class-I aminoacyl-tRNA synthetase family. MetG type 2B subfamily. Homodimer.

The protein localises to the cytoplasm. It catalyses the reaction tRNA(Met) + L-methionine + ATP = L-methionyl-tRNA(Met) + AMP + diphosphate. In terms of biological role, is required not only for elongation of protein synthesis but also for the initiation of all mRNA translation through initiator tRNA(fMet) aminoacylation. The protein is Methionine--tRNA ligase of Staphylococcus epidermidis (strain ATCC 12228 / FDA PCI 1200).